The sequence spans 436 residues: GTPase Obg (436 aa).

One can recognise an Obg domain in the interval 2–160 (SMFLDTAKVS…RELALELKIL (159 aa)). In terms of domain architecture, OBG-type G spans 161–338 (ADVGLVGFPS…LLDATAQLLA (178 aa)). GTP is bound by residues 167-174 (GFPSVGKS), 192-196 (FTTIV), 214-217 (DLPG), 284-287 (NKMD), and 319-321 (SGI). Residues Ser-174 and Thr-194 each contribute to the Mg(2+) site. The region spanning 358 to 436 (GFEEEEKAFD…IGKFEFEFVD (79 aa)) is the OCT domain.

It belongs to the TRAFAC class OBG-HflX-like GTPase superfamily. OBG GTPase family. In terms of assembly, monomer. Requires Mg(2+) as cofactor.

Its subcellular location is the cytoplasm. In terms of biological role, an essential GTPase which binds GTP, GDP and possibly (p)ppGpp with moderate affinity, with high nucleotide exchange rates and a fairly low GTP hydrolysis rate. Plays a role in control of the cell cycle, stress response, ribosome biogenesis and in those bacteria that undergo differentiation, in morphogenesis control. This Streptococcus mutans serotype c (strain ATCC 700610 / UA159) protein is GTPase Obg.